The following is a 219-amino-acid chain: MIEYIIGKISYKNNNYLILENNFKGYKLFMSDPNIFEENSSAKIFVYTKIFQNNKNNFLFEYYGFKTLREKIFFENLLTVNGIGPKTSLTILRNDLNLLKELIRNEDIESLSVLEGFTNKTALSIVSALSYKLKNERISEYNNDVNHSSINQQSNSYNPVPDLVSALKALGYKKNMIEKAINLLIPQLSNVSEDQISDLISQAIKIISDEAVTNKTTVS.

Residues 1–66 are domain I; sequence MIEYIIGKIS…NFLFEYYGFK (66 aa). A domain II region spans residues 67 to 148; the sequence is TLREKIFFEN…SEYNNDVNHS (82 aa). The flexible linker stretch occupies residues 149 to 154; sequence SINQQS. A domain III region spans residues 155–219; the sequence is NSYNPVPDLV…EAVTNKTTVS (65 aa).

The protein belongs to the RuvA family. As to quaternary structure, homotetramer. Forms an RuvA(8)-RuvB(12)-Holliday junction (HJ) complex. HJ DNA is sandwiched between 2 RuvA tetramers; dsDNA enters through RuvA and exits via RuvB. An RuvB hexamer assembles on each DNA strand where it exits the tetramer. Each RuvB hexamer is contacted by two RuvA subunits (via domain III) on 2 adjacent RuvB subunits; this complex drives branch migration. In the full resolvosome a probable DNA-RuvA(4)-RuvB(12)-RuvC(2) complex forms which resolves the HJ.

The protein resides in the cytoplasm. Functionally, the RuvA-RuvB-RuvC complex processes Holliday junction (HJ) DNA during genetic recombination and DNA repair, while the RuvA-RuvB complex plays an important role in the rescue of blocked DNA replication forks via replication fork reversal (RFR). RuvA specifically binds to HJ cruciform DNA, conferring on it an open structure. The RuvB hexamer acts as an ATP-dependent pump, pulling dsDNA into and through the RuvAB complex. HJ branch migration allows RuvC to scan DNA until it finds its consensus sequence, where it cleaves and resolves the cruciform DNA. The sequence is that of Holliday junction branch migration complex subunit RuvA from Malacoplasma penetrans (strain HF-2) (Mycoplasma penetrans).